We begin with the raw amino-acid sequence, 1375 residues long: Protein lingerer (1375 aa).

The tract at residues 1–69 (MSTQTRSGGG…KAQPKATTEQ (69 aa)) is disordered. Over residues 53–62 (SKTDKPEKAQ) the composition is skewed to basic and acidic residues. One can recognise a UBA domain in the interval 84–124 (QINEKVLLLLTMTQRSEEEVCCALNECDYDLEAAANFLIEE). 2 stretches are compositionally biased toward low complexity: residues 142 to 161 (ANNTADGAAGDGDWADGNGN) and 173 to 184 (SNRGGTRGSSDS). Residues 142–286 (ANNTADGAAG…GSGRGGNANE (145 aa)) form a disordered region. Basic and acidic residues predominate over residues 185-204 (RGWRGRETRENERNQRESRE). Residues 228 to 282 (RNGGGRSGPGGGGRGGGFVSRSGRGGGRMGGRTGGPRGDRGSGGPGGAYGSGRGG) are compositionally biased toward gly residues. Phosphotyrosine is present on Tyr-321. Ser-324 is modified (phosphoserine). Composition is skewed to polar residues over residues 374–387 (VQQGSHLEESSSSG) and 395–412 (ATLSGSATTPLLQYSAAV). 2 disordered regions span residues 374-453 (VQQG…ASPD) and 613-646 (FEPLPEKVGSGFSIDGQQQQQQPDDYQSKSQQQQ). Positions 426-441 (SGAGTGASAAAGGGAG) are enriched in gly residues. Low complexity-rich tracts occupy residues 442–453 (STPSSFVSASPD) and 629–646 (QQQQQQPDDYQSKSQQQQ). Phosphoserine is present on Ser-672. Phosphothreonine is present on Thr-673. Phosphoserine is present on Ser-674. Over residues 750-767 (QGYGSYQPSSYQQQAGSG) the composition is skewed to low complexity. Disordered regions lie at residues 750–801 (QGYG…SGNA), 869–894 (SVSTSSGVSSNSGSTGNGGVVSGQTG), 987–1036 (KNTS…GGSG), 1203–1234 (SKGGYSSSVNQQSKTQTVSNQSQAGTGSDLTS), and 1251–1277 (EKQSFHSGTPPPFNMPNTQTAGGTSAQ). Residues 768 to 781 (AQSGTGAVSGGGGT) are compositionally biased toward gly residues. Composition is skewed to low complexity over residues 789-801 (GGSSSQNSTSGNA), 869-882 (SVSTSSGVSSNSGS), and 987-1008 (KNTSSSNSSGSGGSAATTTGNA). The segment covering 1009–1036 (SGQGAGASTGGVGSSSGAGGAGSGGGSG) has biased composition (gly residues). A compositionally biased stretch (polar residues) spans 1265–1277 (MPNTQTAGGTSAQ).

In terms of tissue distribution, at stage 11, expression is restricted to the neuroblasts, predominant in the central nervous system (CNS), including the brain and ventral nerve cord, and in the PNS. Later embryonic expression is seen in the gonads. Late third instar larvae show expression in the CNS, imaginal disks (including genital, eye-antennal, leg, wing and haltere disks), and gonads. In the larval brain, it is expressed in all of the glial cells and in clusters of neurons that projected contralaterally. In the larval ventral ganglion, it is expressed in subperineurial glia, peripheral exit glia, and a number of interneurons, but not in motor neurons. Isoform B is abundantly expressed in males and females. Isoform D is male specific and expressed at low levels.

Its subcellular location is the cytoplasm. Its function is as follows. Acts in the nervous system to mediate the control of copulatory organs during courtship. This chain is Protein lingerer, found in Drosophila melanogaster (Fruit fly).